The following is a 118-amino-acid chain: Large ribosomal subunit protein bL20 (118 aa).

Belongs to the bacterial ribosomal protein bL20 family.

Its function is as follows. Binds directly to 23S ribosomal RNA and is necessary for the in vitro assembly process of the 50S ribosomal subunit. It is not involved in the protein synthesizing functions of that subunit. This chain is Large ribosomal subunit protein bL20, found in Lactobacillus johnsonii (strain CNCM I-12250 / La1 / NCC 533).